The sequence spans 699 residues: D-(-)-3-hydroxybutyrate oligomer hydrolase (699 aa).

Residues 1-33 (MTAIRGGSRRAPGLALALLGGVLLGACHGDENA) form the signal peptide. The Charge relay system role is filled by Ser-311.

This sequence belongs to the D-(-)-3-hydroxybutyrate oligomer hydrolase family.

It is found in the secreted. The enzyme catalyses (3R)-hydroxybutanoate dimer + H2O = 2 (R)-3-hydroxybutanoate + H(+). The protein operates within lipid metabolism; butanoate metabolism. Functionally, participates in the degradation of poly-3-hydroxybutyrate (PHB). It works downstream of poly(3-hydroxybutyrate) depolymerase, hydrolyzing D(-)-3-hydroxybutyrate oligomers of various length (3HB-oligomers) into 3HB-monomers. This is D-(-)-3-hydroxybutyrate oligomer hydrolase from Burkholderia mallei (strain ATCC 23344).